We begin with the raw amino-acid sequence, 181 residues long: Small ribosomal subunit protein uS4 (181 aa).

In terms of domain architecture, S4 RNA-binding spans 108-180 (RRLQTIVYRK…GERQRIMNQR (73 aa)).

Belongs to the universal ribosomal protein uS4 family. As to quaternary structure, part of the 30S ribosomal subunit. Contacts protein S5. The interaction surface between S4 and S5 is involved in control of translational fidelity.

Its function is as follows. One of the primary rRNA binding proteins, it binds directly to 16S rRNA where it nucleates assembly of the body of the 30S subunit. With S5 and S12 plays an important role in translational accuracy. The sequence is that of Small ribosomal subunit protein uS4 from Methanocorpusculum labreanum (strain ATCC 43576 / DSM 4855 / Z).